Consider the following 179-residue polypeptide: IMPACT family member in pol 5'region (179 aa).

It belongs to the IMPACT family.

In Thermus thermophilus, this protein is IMPACT family member in pol 5'region.